The sequence spans 1294 residues: uncharacterized protein (1294 aa).

This is an uncharacterized protein from Schizosaccharomyces pombe (strain 972 / ATCC 24843) (Fission yeast).